The chain runs to 1444 residues: MKSNYSTYLYKMSELERIVNGGDVSSIFIEQDDVLGEIKNFNYDLYTKYDSLVLKDPQTQNNSPKPPSLEIFILVNLIALCGRINDKFPNLDKFLTHYKYATNIFNLLSENIINSIEKFKETLSKDLPSFQLSVIANSSIVKKDNSIIKFLSCFGSFMKLESIEYFGSVFNSLIGEEDQFSLDLLQVLIDSSNEYKKFLQILEFNQLQKYYDDGHLCLFHSIKFDNLNEFKLLFNDSTWCQQQQQQQQINPQIFWFILCKYNSSKIAHYLLNDYQINKKSLKQKNPLEISPVTLLEIAFLCFSDKIAIVLFSQFNYHELLPKKSKMKHLIKSTSTLINNNNNNNNNNNNNNNNNNNNNNNNNNNNNNNSKNIGLTQYTVLEGYFLINIRTRSRIAPFIEVLTMNGIHLTNDIIHTRIKSMSSDSIFRIFTEQYQQQQQNPLNNNQKQIQFNENFTRQQKIDFDNCPNEIDTFILDKTQCNLITLSQEFSIKVRAFTFYLSFGEIFTCSCEDYKREFSCKHMFFILLNYYHVPRNSYLIYQRQFTEIERYSIIMNIDLSKINSRIYGTPNFNTFFKIKSSPSSTTSPFQSINNNNNNNLNNNNNNNLNNNNNNENENKFKEDGDDEILQNLNRLNYILLRDFEFGPNDITTKLRETHINLFDRLLLIEDNLEALDKILKNFTQKGCTLSRDLVGDRNLLVLVAILDSTSKEKLSLLNKYWPLPEKTKKFAIPLIFFAISEECLKMFIQISPNLVKSTLNLHDWISILTEFALINETFLDHYPLLSAWYSDARSVETSLFRLFTCMDKIDCINYLIQTYLLPIPTFKNTLNNFETCYFFETYFLENSSIKAEQYLLEQELLEKKKQKEKKKQKQKQSKSKIINNPLSSSSSSSSSPSTSNTTITSTTPTTTTTTTTTTTPTTTTTTTTTSSPKQKPITPIKKEIEKEFEKIELTTPPPPLATTKQQQINENYDISIGKFKFNRKEENVLGRGSNGTLVFKGIWNNRIPVAIKQMQKMFNPLISKEIEVLITLTNKNCYNIVRYIDQEEDESCVYLGLTLCDGSLQNLVEKGDNNLTLTQFLGYDINSSSKNNSRLLELIKDIVYGIQFLHQQGIVHNDLNPRNILIKDDRFIISDLGLSKMEVTSSYSFTMHAPTGQEGFHPAEVLLEKRKTKSVDIFSMGCILFYLMTGGQHPFGDKFYRIVNILTDKPILEPLKHNLVACDLISQMISKNESDRPTIEKILLHPFFWNHEKKVKFIDASLNLFKDSNGLFTSKLNKLINYQEINLKNNIDSSSSNNNNNINSNVINNNNNNNNGMATNIPFLSKPWNQLIDQTLIEHIINKQNQLNGVGNNKKVIIYSFDQVKDLVRCIRNTIQHHKEIQRLVRQSPSSNGDNKQEVLDCLESQELVLSYFEEKVPDLLLFLYQKFKKHLDSKSLIYFNDLIIK.

Positions 335-370 (TLINNNNNNNNNNNNNNNNNNNNNNNNNNNNNNNSK) are disordered. Over residues 338 to 368 (NNNNNNNNNNNNNNNNNNNNNNNNNNNNNNN) the composition is skewed to low complexity. The segment at 495–529 (FTFYLSFGEIFTCSCEDYKREFSCKHMFFILLNYY) adopts an SWIM-type zinc-finger fold. The segment covering 584-613 (TSPFQSINNNNNNNLNNNNNNNLNNNNNNE) has biased composition (low complexity). 2 disordered regions span residues 584-619 (TSPF…NKFK) and 864-938 (QKEK…ITPI). 2 coiled-coil regions span residues 593–620 (NNNN…KFKE) and 847–879 (IKAE…KSKI). A compositionally biased stretch (basic residues) spans 864–876 (QKEKKKQKQKQSK). Residues 885 to 937 (SSSSSSSSSPSTSNTTITSTTPTTTTTTTTTTTPTTTTTTTTTSSPKQKPITP) show a composition bias toward low complexity. In terms of domain architecture, Protein kinase spans 981–1246 (RKEENVLGRG…IEKILLHPFF (266 aa)). ATP-binding positions include 987–995 (LGRGSNGTL) and K1010. D1116 (proton acceptor) is an active-site residue. Positions 1279-1444 (NYQEINLKNN…LIYFNDLIIK (166 aa)) constitute a KEN domain.

The protein belongs to the protein kinase superfamily. Ser/Thr protein kinase family.

The enzyme catalyses L-seryl-[protein] + ATP = O-phospho-L-seryl-[protein] + ADP + H(+). It carries out the reaction L-threonyl-[protein] + ATP = O-phospho-L-threonyl-[protein] + ADP + H(+). This chain is Probable serine/threonine-protein kinase irlC (irlC), found in Dictyostelium discoideum (Social amoeba).